The sequence spans 225 residues: UPF0758 protein Sden_0326 (225 aa).

The region spanning 102-224 is the MPN domain; that stretch reads ILTNPDLTRD…IVSFAERGWL (123 aa). The Zn(2+) site is built by His-173, His-175, and Asp-186. The JAMM motif motif lies at 173–186; sequence HNHPSGIAEPSQAD.

Belongs to the UPF0758 family.

The polypeptide is UPF0758 protein Sden_0326 (Shewanella denitrificans (strain OS217 / ATCC BAA-1090 / DSM 15013)).